The primary structure comprises 705 residues: Prolyl endopeptidase (705 aa).

Positions 1 to 20 (MKYKKLSVAVAAFAFAAVSA) are cleaved as a signal peptide. Catalysis depends on charge relay system residues serine 556 and histidine 675.

The protein belongs to the peptidase S9A family. In terms of assembly, monomer.

Its subcellular location is the periplasm. It carries out the reaction Hydrolysis of Pro-|-Xaa &gt;&gt; Ala-|-Xaa in oligopeptides.. Functionally, cleaves peptide bonds on the C-terminal side of prolyl residues within peptides that are up to approximately 30 amino acids long. Has an absolute requirement for an X-Pro bond in the trans configuration immediately preceding the Pro-Y scissible bond. The sequence is that of Prolyl endopeptidase from Elizabethkingia miricola (Chryseobacterium miricola).